Here is a 179-residue protein sequence, read N- to C-terminus: uncharacterized protein (179 aa).

It localises to the plastid. It is found in the cyanelle. This is an uncharacterized protein from Cyanophora paradoxa.